A 1096-amino-acid chain; its full sequence is Eukaryotic translation initiation factor 3 subunit A (1096 aa).

A PCI domain is found at 323–502 (QATRVLLATL…GSIHFGAADA (180 aa)). Coiled-coil stretches lie at residues 591–643 (SERQ…IDRK), 677–761 (SVLR…RMQK), and 811–839 (KEGA…ERRA). Positions 808 to 852 (ELPKEGAEERMASAREVAEQTRRDEQEKERRAVRESQRPSKREIV) are enriched in basic and acidic residues. Positions 808–1096 (ELPKEGAEER…ADDDRNWRQK (289 aa)) are disordered. Residues 865–875 (AQPTQPRTISS) are compositionally biased toward polar residues. Basic and acidic residues-rich tracts occupy residues 878–890 (FGER…RYRE), 933–942 (SNREQARGEA), and 955–973 (QRDR…KRGE). The span at 1008 to 1023 (DSSQRTSAATPTTQPW) shows a compositional bias: polar residues. The span at 1085 to 1096 (GAADDDRNWRQK) shows a compositional bias: basic and acidic residues.

Belongs to the eIF-3 subunit A family. In terms of assembly, component of the eukaryotic translation initiation factor 3 (eIF-3) complex.

The protein localises to the cytoplasm. In terms of biological role, RNA-binding component of the eukaryotic translation initiation factor 3 (eIF-3) complex, which is involved in protein synthesis of a specialized repertoire of mRNAs and, together with other initiation factors, stimulates binding of mRNA and methionyl-tRNAi to the 40S ribosome. The eIF-3 complex specifically targets and initiates translation of a subset of mRNAs involved in cell proliferation. The protein is Eukaryotic translation initiation factor 3 subunit A of Brugia malayi (Filarial nematode worm).